The chain runs to 316 residues: ATP synthase gamma chain (316 aa).

Belongs to the ATPase gamma chain family. In terms of assembly, F-type ATPases have 2 components, CF(1) - the catalytic core - and CF(0) - the membrane proton channel. CF(1) has five subunits: alpha(3), beta(3), gamma(1), delta(1), epsilon(1). CF(0) has three main subunits: a, b and c.

The protein localises to the cellular thylakoid membrane. In terms of biological role, produces ATP from ADP in the presence of a proton gradient across the membrane. The gamma chain is believed to be important in regulating ATPase activity and the flow of protons through the CF(0) complex. This Synechococcus sp. (strain ATCC 27144 / PCC 6301 / SAUG 1402/1) (Anacystis nidulans) protein is ATP synthase gamma chain.